A 287-amino-acid chain; its full sequence is Large ribosomal subunit protein uL2 (287 aa).

The disordered stretch occupies residues 221–287 (RGSVMNPCDH…SKRSRGGRDS (67 aa)). Positions 271-287 (LRKRRKTSKRSRGGRDS) are enriched in basic residues.

The protein belongs to the universal ribosomal protein uL2 family. As to quaternary structure, part of the 50S ribosomal subunit. Forms a bridge to the 30S subunit in the 70S ribosome.

In terms of biological role, one of the primary rRNA binding proteins. Required for association of the 30S and 50S subunits to form the 70S ribosome, for tRNA binding and peptide bond formation. It has been suggested to have peptidyltransferase activity; this is somewhat controversial. Makes several contacts with the 16S rRNA in the 70S ribosome. This Synechococcus sp. (strain CC9605) protein is Large ribosomal subunit protein uL2.